The following is a 270-amino-acid chain: Phosphatidate cytidylyltransferase (270 aa).

A run of 7 helical transmembrane segments spans residues Leu19–Ala39, Thr53–Leu73, Gly76–Trp96, Gly101–Arg121, Phe126–Tyr146, Leu183–Leu203, and Ala248–Phe268.

Belongs to the CDS family.

Its subcellular location is the cell inner membrane. It catalyses the reaction a 1,2-diacyl-sn-glycero-3-phosphate + CTP + H(+) = a CDP-1,2-diacyl-sn-glycerol + diphosphate. The protein operates within phospholipid metabolism; CDP-diacylglycerol biosynthesis; CDP-diacylglycerol from sn-glycerol 3-phosphate: step 3/3. This chain is Phosphatidate cytidylyltransferase (cdsA), found in Brucella abortus (strain 2308).